A 276-amino-acid polypeptide reads, in one-letter code: NH(3)-dependent NAD(+) synthetase (276 aa).

39–46 (GLSGGVDS) lines the ATP pocket. Residue D45 coordinates Mg(2+). R123 lines the deamido-NAD(+) pocket. T143 serves as a coordination point for ATP. E148 is a binding site for Mg(2+). Deamido-NAD(+) is bound by residues K156 and D163. ATP-binding residues include K172 and S194. Residue 254–255 (HK) coordinates deamido-NAD(+).

This sequence belongs to the NAD synthetase family. Homodimer.

It carries out the reaction deamido-NAD(+) + NH4(+) + ATP = AMP + diphosphate + NAD(+) + H(+). Its pathway is cofactor biosynthesis; NAD(+) biosynthesis; NAD(+) from deamido-NAD(+) (ammonia route): step 1/1. Functionally, catalyzes the ATP-dependent amidation of deamido-NAD to form NAD. Uses ammonia as a nitrogen source. The sequence is that of NH(3)-dependent NAD(+) synthetase from Hyperthermus butylicus (strain DSM 5456 / JCM 9403 / PLM1-5).